We begin with the raw amino-acid sequence, 939 residues long: AP-2 complex subunit alpha-2 (939 aa).

A 1,2-diacyl-sn-glycero-3-phospho-(1D-myo-inositol-3,4,5-trisphosphate) is bound by residues Arg11–Gly12, Lys43, Tyr53, and Lys57–Lys61. Residues Leu612–Ser681 form a disordered region. Over residues Pro646 to Ala667 the composition is skewed to low complexity. Residues Pro668 to Ser677 are compositionally biased toward pro residues.

Belongs to the adaptor complexes large subunit family. Adaptor protein complex 2 (AP-2) is a heterotetramer composed of two large adaptins (alpha-type subunit AP2A1 or AP2A2 and beta-type subunit AP2B1), a medium adaptin (mu-type subunit AP2M1) and a small adaptin (sigma-type subunit AP2S1). Binds EPN1, EPS15, AMPH, SNAP91 and BIN1. Interacts with HIP1. Interacts with DGKD. Interacts with DENND1A, DENND1B and DENND1C. Interacts with FCHO1 and DAB2. Interacts with ATAT1; this interaction is required for efficient alpha-tubulin acetylation by ATAT1. Interacts with KIAA1107. Together with AP2B1 and AP2M1, it interacts with ADAM10; this interaction facilitates ADAM10 endocytosis from the plasma membrane during long-term potentiation in hippocampal neurons. Interacts with CLN3 (via dileucine motif). Interacts with ABCB11; this interaction regulates cell membrane expression of ABCB11 through its internalization in a clathrin-dependent manner and its subsequent degradation. Interacts with Cacfd1. Interacts with DNAJC6. Expressed in the brain (at protein level).

It is found in the cell membrane. The protein resides in the membrane. It localises to the coated pit. In terms of biological role, component of the adaptor protein complex 2 (AP-2). Adaptor protein complexes function in protein transport via transport vesicles in different membrane traffic pathways. Adaptor protein complexes are vesicle coat components and appear to be involved in cargo selection and vesicle formation. AP-2 is involved in clathrin-dependent endocytosis in which cargo proteins are incorporated into vesicles surrounded by clathrin (clathrin-coated vesicles, CCVs) which are destined for fusion with the early endosome. The clathrin lattice serves as a mechanical scaffold but is itself unable to bind directly to membrane components. Clathrin-associated adaptor protein (AP) complexes which can bind directly to both the clathrin lattice and to the lipid and protein components of membranes are considered to be the major clathrin adaptors contributing the CCV formation. AP-2 also serves as a cargo receptor to selectively sort the membrane proteins involved in receptor-mediated endocytosis. AP-2 seems to play a role in the recycling of synaptic vesicle membranes from the presynaptic surface. AP-2 recognizes Y-X-X-[FILMV] (Y-X-X-Phi) and [ED]-X-X-X-L-[LI] endocytosis signal motifs within the cytosolic tails of transmembrane cargo molecules. AP-2 may also play a role in maintaining normal post-endocytic trafficking through the ARF6-regulated, non-clathrin pathway. During long-term potentiation in hippocampal neurons, AP-2 is responsible for the endocytosis of ADAM10. The AP-2 alpha subunit binds polyphosphoinositide-containing lipids, positioning AP-2 on the membrane. The AP-2 alpha subunit acts via its C-terminal appendage domain as a scaffolding platform for endocytic accessory proteins. The AP-2 alpha and AP-2 sigma subunits are thought to contribute to the recognition of the [ED]-X-X-X-L-[LI] motif. The protein is AP-2 complex subunit alpha-2 (AP2A2) of Homo sapiens (Human).